A 140-amino-acid polypeptide reads, in one-letter code: ATP synthase epsilon chain (140 aa).

This sequence belongs to the ATPase epsilon chain family. As to quaternary structure, F-type ATPases have 2 components, CF(1) - the catalytic core - and CF(0) - the membrane proton channel. CF(1) has five subunits: alpha(3), beta(3), gamma(1), delta(1), epsilon(1). CF(0) has three main subunits: a, b and c.

The protein resides in the cell inner membrane. In terms of biological role, produces ATP from ADP in the presence of a proton gradient across the membrane. This Neisseria meningitidis serogroup C / serotype 2a (strain ATCC 700532 / DSM 15464 / FAM18) protein is ATP synthase epsilon chain.